The primary structure comprises 222 residues: Embryonic stem cell-related gene protein (222 aa).

In terms of tissue distribution, expressed only in fetal ovary and in undifferentiated ES cells.

The protein localises to the nucleus. The chain is Embryonic stem cell-related gene protein (ESRG) from Homo sapiens (Human).